A 394-amino-acid polypeptide reads, in one-letter code: Elongation factor Tu (394 aa).

Residues 10 to 204 (KPHINVGTIG…ALDNYIPEPK (195 aa)) form the tr-type G domain. A G1 region spans residues 19–26 (GHVDHGKT). 19 to 26 (GHVDHGKT) is a GTP binding site. Position 26 (Thr26) interacts with Mg(2+). The tract at residues 60–64 (GITIN) is G2. Residues 81-84 (DCPG) form a G3 region. Residues 81–85 (DCPGH) and 136–139 (NKCD) contribute to the GTP site. Positions 136-139 (NKCD) are G4. Positions 174–176 (SAL) are G5.

Belongs to the TRAFAC class translation factor GTPase superfamily. Classic translation factor GTPase family. EF-Tu/EF-1A subfamily. As to quaternary structure, monomer.

The protein localises to the cytoplasm. It catalyses the reaction GTP + H2O = GDP + phosphate + H(+). GTP hydrolase that promotes the GTP-dependent binding of aminoacyl-tRNA to the A-site of ribosomes during protein biosynthesis. In Blochmanniella pennsylvanica (strain BPEN), this protein is Elongation factor Tu.